Consider the following 122-residue polypeptide: Histone H2B (122 aa).

The segment at Met-1–Lys-31 is disordered. Pro-2 carries the post-translational modification N,N-dimethylproline. Gln-10 is covalently cross-linked (Isoglutamyl lysine isopeptide (Gln-Lys) (interchain with K-5 in histone H4)). Ser-109 carries O-linked (GlcNAc) serine glycosylation. A Glycyl lysine isopeptide (Lys-Gly) (interchain with G-Cter in ubiquitin) cross-link involves residue Lys-117.

This sequence belongs to the histone H2B family. The nucleosome is a histone octamer containing two molecules each of H2A, H2B, H3 and H4 assembled in one H3-H4 heterotetramer and two H2A-H2B heterodimers. The octamer wraps approximately 147 bp of DNA. Post-translationally, monoubiquitination of Lys-117 gives a specific tag for epigenetic transcriptional activation and is also prerequisite for histone H3 'Lys-4' and 'Lys-79' methylation. GlcNAcylation at Ser-109 promotes monoubiquitination of Lys-117. It fluctuates in response to extracellular glucose, and associates with transcribed genes.

It is found in the nucleus. Its subcellular location is the chromosome. Core component of nucleosome. Nucleosomes wrap and compact DNA into chromatin, limiting DNA accessibility to the cellular machineries which require DNA as a template. Histones thereby play a central role in transcription regulation, DNA repair, DNA replication and chromosomal stability. DNA accessibility is regulated via a complex set of post-translational modifications of histones, also called histone code, and nucleosome remodeling. This is Histone H2B from Patiria pectinifera (Starfish).